The primary structure comprises 578 residues: Sulfite reductase [NADPH] hemoprotein beta-component (578 aa).

[4Fe-4S] cluster is bound by residues C441, C447, C487, and C491. A siroheme-binding site is contributed by C491.

This sequence belongs to the nitrite and sulfite reductase 4Fe-4S domain family. In terms of assembly, alpha(8)-beta(8). The alpha component is a flavoprotein, the beta component is a hemoprotein. Siroheme serves as cofactor. It depends on [4Fe-4S] cluster as a cofactor.

It carries out the reaction hydrogen sulfide + 3 NADP(+) + 3 H2O = sulfite + 3 NADPH + 4 H(+). The protein operates within sulfur metabolism; hydrogen sulfide biosynthesis; hydrogen sulfide from sulfite (NADPH route): step 1/1. Its function is as follows. Component of the sulfite reductase complex that catalyzes the 6-electron reduction of sulfite to sulfide. This is one of several activities required for the biosynthesis of L-cysteine from sulfate. The protein is Sulfite reductase [NADPH] hemoprotein beta-component of Vibrio parahaemolyticus serotype O3:K6 (strain RIMD 2210633).